A 172-amino-acid chain; its full sequence is NADH-ubiquinone oxidoreductase chain 6 (172 aa).

Transmembrane regions (helical) follow at residues 1 to 21, 38 to 58, 86 to 106, and 147 to 167; these read MNNYIFVLSSLFLVGCLGLAL, VGCLMVLGFGGSFLGLMVFLI, WLILGFLVLGVIMEVFLICVL, and CATWMMVVAGWSLFAGIFIII.

The protein belongs to the complex I subunit 6 family. Core subunit of respiratory chain NADH dehydrogenase (Complex I) which is composed of 45 different subunits.

It localises to the mitochondrion inner membrane. The catalysed reaction is a ubiquinone + NADH + 5 H(+)(in) = a ubiquinol + NAD(+) + 4 H(+)(out). Functionally, core subunit of the mitochondrial membrane respiratory chain NADH dehydrogenase (Complex I) which catalyzes electron transfer from NADH through the respiratory chain, using ubiquinone as an electron acceptor. Essential for the catalytic activity and assembly of complex I. This is NADH-ubiquinone oxidoreductase chain 6 (Mtnd6) from Mus musculus (Mouse).